We begin with the raw amino-acid sequence, 104 residues long: MAEPMISIEVAYAAVDRQALIRVQVPQGSTLRAALQASAIGQQFPELDLAACPVGIFGKQVSDPEQHVIQAGDRIEVYRPLLADPKEVRRLRAAKAAEARKRES.

Belongs to the UPF0125 (RnfH) family.

The protein is Protein RnfH of Pseudomonas fluorescens (strain ATCC BAA-477 / NRRL B-23932 / Pf-5).